Consider the following 462-residue polypeptide: 3beta-hydroxysteroid dehydrogenase/Delta(5)-Delta(4) isomerase 1 (462 aa).

Residues 51-56 (GGAGHL), tyrosine 220, and lysine 224 contribute to the NAD(+) site. Lysine 224 functions as the Proton donor in the catalytic mechanism. 2 helical membrane passes run 321–341 (VGTFSFWTPLNIALGFSSSMI) and 428–448 (VAVLVLGTILIFVAVFSFTFW).

Belongs to the 3-beta-HSD family. Expressed exclusively in the neuron-like XXX(L/R) cells through all four larval stages and becomes fainter in adults.

Its subcellular location is the membrane. It catalyses the reaction a 3beta-hydroxy-Delta(5)-steroid + NAD(+) = a 3-oxo-Delta(5)-steroid + NADH + H(+). The catalysed reaction is cholesterol + NAD(+) = cholest-5-en-3-one + NADH + H(+). It carries out the reaction a 3-oxo-Delta(5)-steroid = a 3-oxo-Delta(4)-steroid. The enzyme catalyses cholest-5-en-3-one = cholest-4-en-3-one. It participates in steroid hormone biosynthesis; dafachronic acid biosynthesis. Its function is as follows. Hydroxysteroid dehydrogenase involved in the biosynthesis of dafrachonic acids. Catalyzes the dehydrogenation of cholesterol or its derivatives and the isomerization of the double carbon bond on the sterol ring. Modifies sterols into a Delta(4)-3-keto-sterols such as cholest-4-en-3-one, precursor of Delta(4)-dafachronic acid. Contributes to the production of Delta(7)-dafachronic acid in the XXX cells. Dafachronic acids act as ligands and bind directly to the nuclear hormone receptor (NHR) daf-12 suppressing dauer formation and inducing reproductive growth. Acts in parallel to AKT-1 to promote reproductive development via DAF-16/FoxO and DAF-12. The sequence is that of 3beta-hydroxysteroid dehydrogenase/Delta(5)-Delta(4) isomerase 1 from Caenorhabditis elegans.